The primary structure comprises 348 residues: Bombesin receptor-activated protein C6orf89 homolog (348 aa).

Residues 1-58 (MDLAANEISIYDKLSETVDLVRQTGHQCGMSEKAIEKFIRQLLEKNEPQRGPPQYPLL) are Cytoplasmic-facing. A helical transmembrane segment spans residues 59–79 (IAMYKVLLTLGLILFTAYFVI). Topologically, residues 80–348 (QPFSSLAPEP…ICDGTTLSEL (269 aa)) are extracellular.

Homodimer. Interacts with BRS3. Interacts (via N-terminus) with SIN3B. Post-translationally, glycosylated.

Its subcellular location is the golgi apparatus membrane. The protein localises to the cytoplasm. In terms of biological role, exhibits histone deacetylase (HDAC) enhancer properties. May play a role in cell cycle progression and wound repair of bronchial epithelial cells. The sequence is that of Bombesin receptor-activated protein C6orf89 homolog from Rattus norvegicus (Rat).